Consider the following 81-residue polypeptide: Small ribosomal subunit protein bS16 (81 aa).

It belongs to the bacterial ribosomal protein bS16 family.

The chain is Small ribosomal subunit protein bS16 from Clostridium botulinum (strain Eklund 17B / Type B).